The sequence spans 173 residues: MTREEKAQVIEALTAQLAENPTIYLADISGLDAGSTSNLRRACFKANVKLAVVKNTLLAKAMEAAEKDFGELPTVLKGNTSIMLSETGNAPAKVIKEFRKKSEKPLLKGAFVEEAIYVGDDYLDTLVNIKSKEEVIGDIVGLLQSPAKNVVSALKSGGGKIAGILKTLSEKEG.

Belongs to the universal ribosomal protein uL10 family. In terms of assembly, part of the ribosomal stalk of the 50S ribosomal subunit. The N-terminus interacts with L11 and the large rRNA to form the base of the stalk. The C-terminus forms an elongated spine to which L12 dimers bind in a sequential fashion forming a multimeric L10(L12)X complex.

Forms part of the ribosomal stalk, playing a central role in the interaction of the ribosome with GTP-bound translation factors. This is Large ribosomal subunit protein uL10 from Christiangramia forsetii (strain DSM 17595 / CGMCC 1.15422 / KT0803) (Gramella forsetii).